Reading from the N-terminus, the 464-residue chain is Putative dipeptidase CPC735_014430 (464 aa).

The tract at residues 1–34 (MSTMSARDNEKGSARSQPSHAAASEIENVPRPSR) is disordered. The chain crosses the membrane as a helical span at residues 40–56 (GTMIKVFIICACAGIVS). The Zn(2+) site is built by H93, D95, and E206. Cysteines 145 and 235 form a disulfide. Residue H233 coordinates substrate. Positions 277 and 298 each coordinate Zn(2+). Substrate-binding residues include R309 and D369. A glycan (N-linked (GlcNAc...) asparagine) is linked at N382.

The protein belongs to the metallo-dependent hydrolases superfamily. Peptidase M19 family. Requires Zn(2+) as cofactor.

The protein localises to the membrane. It catalyses the reaction an L-aminoacyl-L-amino acid + H2O = 2 an L-alpha-amino acid. Functionally, hydrolyzes a wide range of dipeptides. The protein is Putative dipeptidase CPC735_014430 of Coccidioides posadasii (strain C735) (Valley fever fungus).